Consider the following 387-residue polypeptide: Synaptotagmin-8 (387 aa).

Over 1–34 the chain is Extracellular; that stretch reads MGHPPVSPSAPAPAGTTAIPGLIPDLVAGTPWPR. Residues 35 to 55 traverse the membrane as a helical; Signal-anchor for type III membrane protein segment; that stretch reads WALIAGALAAGVLLVSCLLCA. Over 56–387 the chain is Cytoplasmic; the sequence is ACCCCRRHRK…LRLRLPLPHS (332 aa). The segment at 70–99 is disordered; sequence KESVGLGSARGTTTTHLVQPDVDGLESSPG. C2 domains lie at 103–219 and 231–346; these read QWGC…EHWY and QVGE…QHWA.

This sequence belongs to the synaptotagmin family. As to quaternary structure, homodimer or homooligomer. Homodimerization and homooligomerization do not depend on Ca(2+). Interacts with SYNCRIP isoform 2 C-terminus. Binds inositol 1,3,4,5-tetrakisphosphate (IP4). Binds to AP2 in a Ca(2+)-independent manner. Interacts with STX1A, STX1B and STX2; the interaction is Ca(2+)-dependent.

It localises to the cell membrane. Its subcellular location is the cytoplasmic vesicle. The protein resides in the secretory vesicle. The protein localises to the acrosome. In terms of biological role, involved in the trafficking and exocytosis of secretory vesicles in non-neuronal tissues. Mediates Ca(2+)-regulation of exocytosis acrosomal reaction in sperm. May mediate Ca(2+)-regulation of exocytosis in insulin secreted cells. The sequence is that of Synaptotagmin-8 (SYT8) from Homo sapiens (Human).